Here is a 69-residue protein sequence, read N- to C-terminus: Pantinin-1 (69 aa).

The signal sequence occupies residues 1–23; the sequence is MKTQFVILMITVILMQMLVQTEG. At Val-37 the chain carries Valine amide. Positions 41–69 are excised as a propeptide; sequence GLNDRDQLDDLFDSDLSDADIKLLKEMFK.

The protein belongs to the non-disulfide-bridged peptide (NDBP) superfamily. Short antimicrobial peptide (group 4) family. Expressed by the venom gland.

It localises to the secreted. The protein localises to the target cell membrane. Functionally, amphipathic peptide that possesses relatively strong activities against Gram-positive bacteria and a fungus, but has very weak antimicrobial activities against Gram-negative bacteria. Also exhibits very low hemolytic activities against human erythrocytes (64 uM induce 21% of hemolysis). Minimal inhibitory concentration (MIC) are the following: 8 uM against S.aureus, 32 uM against B.magaterium, 32 uM against M.luteus, 28 uM against vancomycin-resistant Enterococci, 14 uM against methicillin-resistant S.aureus, 62 uM against E.coli, &gt;87 uM against P.putida, &gt;87 uM against K.oxytoca, 76 uM against E.cloacae, 72 uM against S.enterica and 16 uM against the fungus C.tropicalis. The polypeptide is Pantinin-1 (Pandinus imperator (Emperor scorpion)).